Reading from the N-terminus, the 356-residue chain is Homoserine O-acetyltransferase (356 aa).

The AB hydrolase-1 domain occupies 50 to 335; it reads NVILVCHALT…DEPYGHDAFL (286 aa). Catalysis depends on S146, which acts as the Nucleophile. R215 contributes to the substrate binding site. Residues D302 and H331 contribute to the active site. D332 contributes to the substrate binding site.

The protein belongs to the AB hydrolase superfamily. MetX family. As to quaternary structure, homodimer.

Its subcellular location is the cytoplasm. The enzyme catalyses L-homoserine + acetyl-CoA = O-acetyl-L-homoserine + CoA. The protein operates within amino-acid biosynthesis; L-methionine biosynthesis via de novo pathway; O-acetyl-L-homoserine from L-homoserine: step 1/1. Its function is as follows. Transfers an acetyl group from acetyl-CoA to L-homoserine, forming acetyl-L-homoserine. The sequence is that of Homoserine O-acetyltransferase from Chlorobaculum tepidum (strain ATCC 49652 / DSM 12025 / NBRC 103806 / TLS) (Chlorobium tepidum).